The chain runs to 412 residues: Divalent metal cation transporter MntH (412 aa).

11 helical membrane passes run 19–39, 46–66, 94–114, 122–142, 155–175, 196–216, 241–261, 290–310, 329–349, 350–370, and 389–409; these read FALMGPAFIAAIGYIDPGNFA, ASFGYKLLWVVVWANLMAMLI, VWFYWVQAEIIAMATDLAEFI, LILGVSLLQGAVLTGIATFLI, LVIGGLLLFVAAAYIVELVFS, AVFLAAGVLGATIMPHVIYLH, IAMTIAGFVNLAMMATAAAAF, IFGLSLVAAGLSSTVVGTLAG, SVTMMPSFIVILMGLDPTRIL, VMSQVLLSFGIALALVPLLIF, and IGWMIVVLVVALNLWLLIGTL.

The protein belongs to the NRAMP family.

The protein resides in the cell inner membrane. Functionally, h(+)-stimulated, divalent metal cation uptake system. This is Divalent metal cation transporter MntH from Enterobacter sp. (strain 638).